Reading from the N-terminus, the 337-residue chain is PHD finger protein 11 (337 aa).

A C2HC pre-PHD-type zinc finger spans residues 25–61 (KRTCALCPEGHEWSQIYFSPSGNIVAHENCLLYSSGL). The PHD-type zinc finger occupies 91–143 (LKCSFCNKGGATVGCDLWFCKKSYHYVCAKKDQAILQVDGNHGTYKLFCPEHS). Disordered regions lie at residues 145 to 196 (EQEE…HGHT) and 301 to 337 (GDLD…GDSL). The segment covering 187 to 196 (HMTEEPHGHT) has biased composition (basic and acidic residues). Composition is skewed to polar residues over residues 301-312 (GDLDCSSSTSGS) and 323-337 (SQES…GDSL).

As to quaternary structure, interacts with BRCA1 and RELA.

It is found in the nucleus. In terms of biological role, positive regulator of Th1-type cytokine gene expression. This Mus musculus (Mouse) protein is PHD finger protein 11 (Phf11).